The chain runs to 115 residues: Large ribosomal subunit protein bL20 (115 aa).

This sequence belongs to the bacterial ribosomal protein bL20 family.

Binds directly to 23S ribosomal RNA and is necessary for the in vitro assembly process of the 50S ribosomal subunit. It is not involved in the protein synthesizing functions of that subunit. This is Large ribosomal subunit protein bL20 from Bdellovibrio bacteriovorus (strain ATCC 15356 / DSM 50701 / NCIMB 9529 / HD100).